Reading from the N-terminus, the 152-residue chain is Large ribosomal subunit protein bL9 (152 aa).

The protein belongs to the bacterial ribosomal protein bL9 family.

Its function is as follows. Binds to the 23S rRNA. The chain is Large ribosomal subunit protein bL9 from Prochlorococcus marinus (strain NATL2A).